Reading from the N-terminus, the 535-residue chain is Probable glucomannan 4-beta-mannosyltransferase 14 (535 aa).

The chain crosses the membrane as a helical span at residues 42-62; sequence QVVSVLLFVDAAYMAIVVAIV. D131 is an active-site residue. Substrate contacts are provided by D193 and D195. Residue D287 is part of the active site. 4 helical membrane passes run 366–386, 403–423, 482–502, and 503–523; these read IVVH…TVIF, ITIL…YWIL, IMVG…GRTY, and LYVY…GYVG.

This sequence belongs to the glycosyltransferase 2 family. Plant cellulose synthase-like A subfamily.

It is found in the golgi apparatus membrane. It catalyses the reaction GDP-mannose + (glucomannan)n = GDP + (glucomannan)n+1.. Functionally, probable mannan synthase which consists of a 4-beta-mannosyltransferase activity on mannan using GDP-mannose. The beta-1,4-mannan product is the backbone for galactomannan synthesis by galactomannan galactosyltransferase. Galactomannan is a noncellulosic polysaccharides of plant cell wall. The chain is Probable glucomannan 4-beta-mannosyltransferase 14 from Arabidopsis thaliana (Mouse-ear cress).